A 171-amino-acid chain; its full sequence is UPF0260 protein Nham_1404 (171 aa).

The protein belongs to the UPF0260 family.

This chain is UPF0260 protein Nham_1404, found in Nitrobacter hamburgensis (strain DSM 10229 / NCIMB 13809 / X14).